A 596-amino-acid polypeptide reads, in one-letter code: UvrABC system protein C (596 aa).

Positions 14-91 (QQPGCYLMKD…IKKYDPRYNV (78 aa)) constitute a GIY-YIG domain. The UVR domain occupies 196–231 (KDIRKNLAGEMQKASEALNFERAKEIRDTIQHIDAT).

It belongs to the UvrC family. In terms of assembly, interacts with UvrB in an incision complex.

Its subcellular location is the cytoplasm. Functionally, the UvrABC repair system catalyzes the recognition and processing of DNA lesions. UvrC both incises the 5' and 3' sides of the lesion. The N-terminal half is responsible for the 3' incision and the C-terminal half is responsible for the 5' incision. In Oceanobacillus iheyensis (strain DSM 14371 / CIP 107618 / JCM 11309 / KCTC 3954 / HTE831), this protein is UvrABC system protein C.